A 496-amino-acid chain; its full sequence is UDP-N-acetylmuramoyl-L-alanyl-D-glutamate--2,6-diaminopimelate ligase (496 aa).

Ser-32 serves as a coordination point for UDP-N-acetyl-alpha-D-muramoyl-L-alanyl-D-glutamate. Gly-116–Thr-122 is an ATP binding site. UDP-N-acetyl-alpha-D-muramoyl-L-alanyl-D-glutamate is bound by residues Thr-158–Thr-159, Ser-185, Gln-191, and Arg-193. Lys-225 is subject to N6-carboxylysine. Residues Arg-389, Asp-413–Arg-416, Gly-464, and Glu-468 each bind meso-2,6-diaminopimelate. Residues Asp-413–Arg-416 carry the Meso-diaminopimelate recognition motif motif.

It belongs to the MurCDEF family. MurE subfamily. It depends on Mg(2+) as a cofactor. Carboxylation is probably crucial for Mg(2+) binding and, consequently, for the gamma-phosphate positioning of ATP.

It is found in the cytoplasm. The enzyme catalyses UDP-N-acetyl-alpha-D-muramoyl-L-alanyl-D-glutamate + meso-2,6-diaminopimelate + ATP = UDP-N-acetyl-alpha-D-muramoyl-L-alanyl-gamma-D-glutamyl-meso-2,6-diaminopimelate + ADP + phosphate + H(+). It participates in cell wall biogenesis; peptidoglycan biosynthesis. Functionally, catalyzes the addition of meso-diaminopimelic acid to the nucleotide precursor UDP-N-acetylmuramoyl-L-alanyl-D-glutamate (UMAG) in the biosynthesis of bacterial cell-wall peptidoglycan. This Nostoc sp. (strain PCC 7120 / SAG 25.82 / UTEX 2576) protein is UDP-N-acetylmuramoyl-L-alanyl-D-glutamate--2,6-diaminopimelate ligase.